Consider the following 337-residue polypeptide: Beta-hexosaminidase (337 aa).

Substrate is bound by residues aspartate 62, arginine 70, arginine 133, and 163 to 164 (KH). Histidine 176 acts as the Proton donor/acceptor in catalysis. The active-site Nucleophile is the aspartate 248.

This sequence belongs to the glycosyl hydrolase 3 family. NagZ subfamily.

It is found in the cytoplasm. It catalyses the reaction Hydrolysis of terminal non-reducing N-acetyl-D-hexosamine residues in N-acetyl-beta-D-hexosaminides.. It participates in cell wall biogenesis; peptidoglycan recycling. In terms of biological role, plays a role in peptidoglycan recycling by cleaving the terminal beta-1,4-linked N-acetylglucosamine (GlcNAc) from peptide-linked peptidoglycan fragments, giving rise to free GlcNAc, anhydro-N-acetylmuramic acid and anhydro-N-acetylmuramic acid-linked peptides. This is Beta-hexosaminidase from Psychromonas ingrahamii (strain DSM 17664 / CCUG 51855 / 37).